The following is a 104-amino-acid chain: Large ribosomal subunit protein bL21 (104 aa).

It belongs to the bacterial ribosomal protein bL21 family. In terms of assembly, part of the 50S ribosomal subunit. Contacts protein L20.

In terms of biological role, this protein binds to 23S rRNA in the presence of protein L20. The sequence is that of Large ribosomal subunit protein bL21 from Nitrosococcus oceani (strain ATCC 19707 / BCRC 17464 / JCM 30415 / NCIMB 11848 / C-107).